The sequence spans 505 residues: Maturase K (505 aa).

It belongs to the intron maturase 2 family. MatK subfamily.

The protein localises to the plastid. Its subcellular location is the chloroplast. Usually encoded in the trnK tRNA gene intron. Probably assists in splicing its own and other chloroplast group II introns. The chain is Maturase K from Nuphar variegata (Yellow pond lily).